The primary structure comprises 829 residues: MVEAGAKISKGGTQQAAGHGLEGYASDGSTDLRSAGAAEHETQDSAKAQENEASANSMDDGLELGRRGQGVSPVLTPPTEEEGDAPAQKNRRQRLKERKATAAAAGALPGIGRARSGSVKEGGSPKAAGAESPRRGAGAAAKDAKISERAEGAGSPQQRKQGTGAAAPGSPPRRRLEAAEPPATPPRRKQAEGEQSRPEGEQGRPENKNKKAKDKHDDLPTRGPGTRRPQVRAVPPPLSEELKNEAFRKTLERVETVAPEVPLQAAEQRSEPSDFDLIINRLRVNAQEYMSQDEQAQENLQEGVRQLKSSYTEFLQTIQPEEKKKGDVEELDEEEEEMRKIDWQFWTSVVNNFATVAKNDSAKLEEKVSDGIPKQIRGIIWQLISNSKSKEIRQLYQDLLQIPSEHEKAIQRDISRTKFIPVDKTESLFNVLKAYSLFDPEVGYTQGMAFVTAPLLINVWEEADAFGLLIKLMKNYGLREFFLPDMPGLQLKLYEFDRLLEENSPQLYNHLIRLGIRSSMYATQWFLTLFAYKFPLGFVLRILDVIFVEGIESLLKFAVILMLKNESVLVQLKFDKLLDFLKDGLFNYYLKENVRKRQEGKEDTNAIQNAEVSDSSSKSSTVGSEILGVEYNINVFIQDAIREVKITPIQLRRYSSEYEEIHQLEFQREAQYEEMRIKNRQLQREVRKLEHDYTLLNREHIMLANELIQNRLKIETLNDENKDLKLTVDVLKRHLSDEMRKQTLPNPDAQIPTDLKEDLEKTMQRNLEVMNQNQELEDKVTALERQVKQLKKNRANTSVEHGEDSSSEPRVRSHIVTPSISSWTFKKPW.

The interval M1–K243 is disordered. Residues A38–E50 are compositionally biased toward basic and acidic residues. The segment covering T101 to R115 has biased composition (low complexity). Composition is skewed to basic and acidic residues over residues K142–E151 and K189–P220. Positions I279–I341 form a coiled coil. The Rab-GAP TBC domain occupies G371–G550. Disordered regions lie at residues G600–S620 and L790–R812. Residues F666–E803 adopt a coiled-coil conformation. Over residues E800–V811 the composition is skewed to basic and acidic residues.

Belongs to the GYP5 family.

It localises to the cytoplasm. In terms of biological role, GTPase-activating protein which accelerates the GTP hydrolysis rate of several GTPases. Involved in ER to Golgi trafficking and polarized exocytosis. The sequence is that of GTPase-activating protein GYP5 (GYP5) from Eremothecium gossypii (strain ATCC 10895 / CBS 109.51 / FGSC 9923 / NRRL Y-1056) (Yeast).